The chain runs to 242 residues: Probable 2-phosphosulfolactate phosphatase (242 aa).

It belongs to the ComB family. It depends on Mg(2+) as a cofactor.

The catalysed reaction is (2R)-O-phospho-3-sulfolactate + H2O = (2R)-3-sulfolactate + phosphate. This Parasynechococcus marenigrum (strain WH8102) protein is Probable 2-phosphosulfolactate phosphatase.